The sequence spans 231 residues: Secreted LysM effector LysM13 (231 aa).

Positions 1 to 19 (MVFLSLKYALSGLAATAAA) are cleaved as a signal peptide. N-linked (GlcNAc...) asparagine glycans are attached at residues asparagine 30, asparagine 34, asparagine 77, asparagine 100, asparagine 130, asparagine 201, and asparagine 226. In terms of domain architecture, LysM spans 38 to 82 (TTYTTTSEDTIFTVARKFDRGPCDIARYNRMIDAEHIFANFTLRI).

This sequence belongs to the secreted LysM effector family.

The protein localises to the secreted. In terms of biological role, secreted LysM effector that might have a role in sequestration of chitin oligosaccharides (breakdown products of fungal cell walls that are released during invasion and act as triggers of host immunity) to dampen host defense. The sequence is that of Secreted LysM effector LysM13 from Penicillium expansum (Blue mold rot fungus).